Here is a 64-residue protein sequence, read N- to C-terminus: Prokaryotic ubiquitin-like protein Pup (64 aa).

The disordered stretch occupies residues 1-37 (MAQEQTKRGGGGGEDDDLTGSTAAGQERREKLTDETD). The interval 21–58 (STAAGQERREKLTDETDDLLDEIDDVLEENAEDFVRAY) is ARC ATPase binding. Residues 23-52 (AAGQERREKLTDETDDLLDEIDDVLEENAE) are a coiled coil. Deamidated glutamine is present on Gln64. Residue Gln64 forms an Isoglutamyl lysine isopeptide (Gln-Lys) (interchain with K-? in acceptor proteins) linkage.

This sequence belongs to the prokaryotic ubiquitin-like protein family. As to quaternary structure, strongly interacts with the proteasome-associated ATPase ARC through a hydrophobic interface; the interacting region of Pup lies in its C-terminal half. There is one Pup binding site per ARC hexamer ring. Post-translationally, is modified by deamidation of its C-terminal glutamine to glutamate by the deamidase Dop, a prerequisite to the subsequent pupylation process.

The protein operates within protein degradation; proteasomal Pup-dependent pathway. Protein modifier that is covalently attached to lysine residues of substrate proteins, thereby targeting them for proteasomal degradation. The tagging system is termed pupylation. This Mycolicibacterium vanbaalenii (strain DSM 7251 / JCM 13017 / BCRC 16820 / KCTC 9966 / NRRL B-24157 / PYR-1) (Mycobacterium vanbaalenii) protein is Prokaryotic ubiquitin-like protein Pup.